A 160-amino-acid polypeptide reads, in one-letter code: Twist-related protein 2 (160 aa).

A disordered region spans residues 1 to 63; that stretch reads MEEGSSSPVS…GSPSAQSFEE (63 aa). Basic residues predominate over residues 27 to 37; that stretch reads KRFGRKRRYSK. The region spanning 66–117 is the bHLH domain; the sequence is SQRILANVRERQRTQSLNEAFAALRKIIPTLPSDKLSKIQTLKLAARYIDFL.

In terms of assembly, efficient DNA binding requires dimerization with another bHLH protein. Forms a heterodimer with TCF3/E12. Also interacts with MEF2C. As to expression, expressed at low levels in sclerotome and dermatome of somites, and in limb buds at 10.5 dpc. Accumulates predominantly in dermatome, prevertebrae and derivatives of branchial arches by 13 dpc. Also expressed near surface of embryo and in chondrogenic cells. In adult, expressed at low levels in skin, bladder, uterus, aorta and heart.

Its subcellular location is the nucleus. The protein resides in the cytoplasm. Functionally, binds to the E-box consensus sequence 5'-CANNTG-3' as a heterodimer and inhibits transcriptional activation by MYOD1, MYOG, MEF2A and MEF2C. Also represses expression of pro-inflammatory cytokines such as TNFA and IL1B. Involved in postnatal glycogen storage and energy metabolism. Inhibits the premature or ectopic differentiation of preosteoblast cells during osteogenesis, possibly by changing the internal signal transduction response of osteoblasts to external growth factors. The sequence is that of Twist-related protein 2 (Twist2) from Mus musculus (Mouse).